We begin with the raw amino-acid sequence, 311 residues long: Transcriptional regulatory protein MoaR1 (311 aa).

A DNA-binding region (ompR/PhoB-type) is located at residues 15–117 (LNATTAGAVQ…SEPPGYRLLI (103 aa)).

This sequence belongs to the AfsR/DnrI/RedD regulatory family.

Its function is as follows. Acts as a positive transcriptional regulator of the molybdopterin biosynthesis moa1 locus, promoting the expression of the moaA1B1C1D1 genes. Binds directly to the moaA1 promoter. The polypeptide is Transcriptional regulatory protein MoaR1 (moaR1) (Mycobacterium tuberculosis (strain ATCC 25618 / H37Rv)).